The chain runs to 435 residues: Keratin, type I cytoskeletal 18 (435 aa).

Low complexity predominate over residues 1–28 (MSLRSSYSVRSSTSQVPVSQMSQMSQMS). Positions 1-36 (MSLRSSYSVRSSTSQVPVSQMSQMSQMSIKRTTNVP) are disordered. Positions 2-88 (SLRSSYSVRS…TGATGDIMGN (87 aa)) are head. Residues 89-123 (EKMAMQNLNDRLASYLRSETLEQANSKLELKIREA) form a coil 1A region. In terms of domain architecture, IF rod spans 89–399 (EKMAMQNLND…RLLDGGDFKL (311 aa)). The tract at residues 124-140 (LEKKGPEVCDYSRFQPI) is linker 1. The interval 141–232 (IDDLRRKIFD…KNHDNEVMEL (92 aa)) is coil 1B. A linker 12 region spans residues 233 to 256 (RNQISHSGVQVDVDAPKGQDLAKI). Positions 257 to 394 (MEEIRSKYEK…IATYRRLLDG (138 aa)) are coil 2. The tail stretch occupies residues 395 to 435 (GDFKLQDALEEQKRVKVMTVTQTLVDGKVVSSSTETKEKKF).

It belongs to the intermediate filament family. Heterotetramer of two type I and two type II keratins. Keratin-18 associates with keratin-8. Phosphorylated. In terms of processing, proteolytically cleaved by caspases during epithelial cell apoptosis. As to expression, abundantly expressed in an even distribution throughout the optic nerve, localizing specifically to the astrocyte domains. Moderately expressed in spinal cord, brain, liver and oocytes.

In terms of biological role, when phosphorylated, plays a role in filament reorganization. This chain is Keratin, type I cytoskeletal 18 (krt18), found in Carassius auratus (Goldfish).